The primary structure comprises 581 residues: Proline--tRNA ligase 1 (581 aa).

Belongs to the class-II aminoacyl-tRNA synthetase family. ProS type 1 subfamily. Homodimer.

The protein resides in the cytoplasm. It catalyses the reaction tRNA(Pro) + L-proline + ATP = L-prolyl-tRNA(Pro) + AMP + diphosphate. Catalyzes the attachment of proline to tRNA(Pro) in a two-step reaction: proline is first activated by ATP to form Pro-AMP and then transferred to the acceptor end of tRNA(Pro). As ProRS can inadvertently accommodate and process non-cognate amino acids such as alanine and cysteine, to avoid such errors it has two additional distinct editing activities against alanine. One activity is designated as 'pretransfer' editing and involves the tRNA(Pro)-independent hydrolysis of activated Ala-AMP. The other activity is designated 'posttransfer' editing and involves deacylation of mischarged Ala-tRNA(Pro). The misacylated Cys-tRNA(Pro) is not edited by ProRS. The sequence is that of Proline--tRNA ligase 1 from Rhodococcus jostii (strain RHA1).